We begin with the raw amino-acid sequence, 513 residues long: Sphingolipid C9-methyltransferase 1 (513 aa).

2 helical membrane-spanning segments follow: residues 63-83 (FLVA…GGGL) and 85-105 (TAIF…WTVM). S-adenosyl-L-methionine contacts are provided by residues 228–229 (YT), 265–273 (LLDIGCGWG), 291–296 (TLARNQ), and 321–322 (YR).

The protein belongs to the CFA/CMAS family.

It is found in the membrane. It carries out the reaction a (4E,8E)-4-sphinga-4,8-dienine ceramide + S-adenosyl-L-methionine = a 9-methyl-(4E,8E)-sphinga-4,8-dienine ceramide + S-adenosyl-L-homocysteine + H(+). It functions in the pathway lipid metabolism; sphingolipid metabolism. Catalyzes methylation of the sphingoid base component of glucosylceramides (GluCers) at the C9-position. Sphingolipid C9-methylation requires 4,8-desaturated ceramides as substrates. Glucosylceramides play important roles in the growth, differentiation and pathogenicity. The methyl group at the C9-position distinguishes fungal glucosylceramides from those of plants and animals, and may thus play a role in host-pathogen interactions enabling the host to recognize the fungal attack and initiate specific defense responses. However, C-9 methylation of GlcCers is not essential for the sensitivity of F.graminearum to plant defensins MsDef1 and RsAFP2. This chain is Sphingolipid C9-methyltransferase 1, found in Gibberella zeae (strain ATCC MYA-4620 / CBS 123657 / FGSC 9075 / NRRL 31084 / PH-1) (Wheat head blight fungus).